Reading from the N-terminus, the 392-residue chain is tRNA (guanine-N(7)-)-methyltransferase (392 aa).

S-adenosyl-L-methionine-binding residues include glutamate 123, glutamate 148, and aspartate 175. The substrate site is built by lysine 201 and aspartate 231.

This sequence belongs to the class I-like SAM-binding methyltransferase superfamily. TrmB family.

It catalyses the reaction guanosine(46) in tRNA + S-adenosyl-L-methionine = N(7)-methylguanosine(46) in tRNA + S-adenosyl-L-homocysteine. It participates in tRNA modification; N(7)-methylguanine-tRNA biosynthesis. Its function is as follows. Catalyzes the formation of N(7)-methylguanine at position 46 (m7G46) in tRNA. In Campylobacter jejuni subsp. doylei (strain ATCC BAA-1458 / RM4099 / 269.97), this protein is tRNA (guanine-N(7)-)-methyltransferase.